The following is a 130-amino-acid chain: Small ribosomal subunit protein uS8 (130 aa).

Belongs to the universal ribosomal protein uS8 family. In terms of assembly, part of the 30S ribosomal subunit.

Functionally, one of the primary rRNA binding proteins, it binds directly to 16S rRNA central domain where it helps coordinate assembly of the platform of the 30S subunit. The polypeptide is Small ribosomal subunit protein uS8 (Methanopyrus kandleri (strain AV19 / DSM 6324 / JCM 9639 / NBRC 100938)).